The chain runs to 201 residues: 3-isopropylmalate dehydratase small subunit (201 aa).

Belongs to the LeuD family. LeuD type 1 subfamily. In terms of assembly, heterodimer of LeuC and LeuD.

The catalysed reaction is (2R,3S)-3-isopropylmalate = (2S)-2-isopropylmalate. It functions in the pathway amino-acid biosynthesis; L-leucine biosynthesis; L-leucine from 3-methyl-2-oxobutanoate: step 2/4. Catalyzes the isomerization between 2-isopropylmalate and 3-isopropylmalate, via the formation of 2-isopropylmaleate. The polypeptide is 3-isopropylmalate dehydratase small subunit (Shewanella oneidensis (strain ATCC 700550 / JCM 31522 / CIP 106686 / LMG 19005 / NCIMB 14063 / MR-1)).